The primary structure comprises 348 residues: NADH-quinone oxidoreductase subunit H (348 aa).

The next 8 membrane-spanning stretches (helical) occupy residues Ile25 to Leu45, Phe95 to Ile115, Ile128 to Gly148, Ile168 to Phe188, Trp204 to Thr224, Phe254 to Phe274, Ile287 to Leu307, and Val327 to Ala347.

The protein belongs to the complex I subunit 1 family. In terms of assembly, NDH-1 is composed of 14 different subunits. Subunits NuoA, H, J, K, L, M, N constitute the membrane sector of the complex.

Its subcellular location is the cell inner membrane. It carries out the reaction a quinone + NADH + 5 H(+)(in) = a quinol + NAD(+) + 4 H(+)(out). NDH-1 shuttles electrons from NADH, via FMN and iron-sulfur (Fe-S) centers, to quinones in the respiratory chain. The immediate electron acceptor for the enzyme in this species is believed to be ubiquinone. Couples the redox reaction to proton translocation (for every two electrons transferred, four hydrogen ions are translocated across the cytoplasmic membrane), and thus conserves the redox energy in a proton gradient. This subunit may bind ubiquinone. The protein is NADH-quinone oxidoreductase subunit H of Psychrobacter sp. (strain PRwf-1).